We begin with the raw amino-acid sequence, 227 residues long: Endo-1,4-beta-xylanase 11A (227 aa).

An N-terminal signal peptide occupies residues methionine 1–arginine 36. The 191-residue stretch at alanine 37–serine 227 folds into the GH11 domain. A necrosis inducing domain region spans residues valine 112 to serine 136. Glutamate 122 serves as the catalytic Nucleophile. Glutamate 214 acts as the Proton donor in catalysis.

The protein belongs to the glycosyl hydrolase 11 (cellulase G) family.

It is found in the secreted. The catalysed reaction is Endohydrolysis of (1-&gt;4)-beta-D-xylosidic linkages in xylans.. It participates in glycan degradation; xylan degradation. Significantly inhibited by the wheat xylanase inhibiting protein I (XIP-I) and the proteinaceous endoxylanase Triticum aestivum xylanase inhibitors I (TAXI-I), whereas no inhibition is detected with TAXI-II. Endo-1,4-beta-xylanase involved in the hydrolysis of xylan, a major structural heterogeneous polysaccharide found in plant biomass representing the second most abundant polysaccharide in the biosphere, after cellulose. Required for plant infection and the appearance of secondary lesions. Is able to induce necrosis on leaves, seedling growth inhibition, induction of a ROS burst, electrolyte leakage, cytoplasm shrinkage, autofluorescence, cell death, and induction of defense genes, and this abilities are independent of the catalytic activity. Only exhibits elicitor activity in certain plants such as tomato, but not in N.benthamiana. This Botryotinia fuckeliana (strain B05.10) (Noble rot fungus) protein is Endo-1,4-beta-xylanase 11A.